The sequence spans 391 residues: Arsenite methyltransferase (391 aa).

Residues methionine 1 to glutamate 126 form a disordered region. Polar residues predominate over residues cysteine 28 to asparagine 39. Residues serine 40–alanine 65 are compositionally biased toward low complexity. Residues lysine 102 to glutamate 116 show a composition bias toward polar residues.

It belongs to the methyltransferase superfamily. Arsenite methyltransferase family.

The catalysed reaction is arsenic triglutathione + [thioredoxin]-dithiol + S-adenosyl-L-methionine + 2 H2O = methylarsonous acid + [thioredoxin]-disulfide + 3 glutathione + S-adenosyl-L-homocysteine + H(+). The enzyme catalyses arsenic triglutathione + 2 [thioredoxin]-dithiol + 2 S-adenosyl-L-methionine + H2O = dimethylarsinous acid + 2 [thioredoxin]-disulfide + 3 glutathione + 2 S-adenosyl-L-homocysteine + 2 H(+). It catalyses the reaction arsenic triglutathione + 3 [thioredoxin]-dithiol + 3 S-adenosyl-L-methionine = trimethylarsine + 3 [thioredoxin]-disulfide + 3 glutathione + 3 S-adenosyl-L-homocysteine + 3 H(+). Its function is as follows. Catalyzes the transfer of a methyl group from AdoMet to arsenite, producing methylated arsenicals. The sequence is that of Arsenite methyltransferase from Halobacterium salinarum (strain ATCC 700922 / JCM 11081 / NRC-1) (Halobacterium halobium).